Reading from the N-terminus, the 303-residue chain is N-acetyl-D-glucosamine kinase (303 aa).

ATP-binding positions include 4-11 (GFDIGGTK) and 133-140 (GVGGGLVL). H157, C177, C179, and C184 together coordinate Zn(2+).

The protein belongs to the ROK (NagC/XylR) family. NagK subfamily.

The catalysed reaction is N-acetyl-D-glucosamine + ATP = N-acetyl-D-glucosamine 6-phosphate + ADP + H(+). The protein operates within cell wall biogenesis; peptidoglycan recycling. Its function is as follows. Catalyzes the phosphorylation of N-acetyl-D-glucosamine (GlcNAc) derived from cell-wall degradation, yielding GlcNAc-6-P. The polypeptide is N-acetyl-D-glucosamine kinase (Salmonella heidelberg (strain SL476)).